The following is a 11197-amino-acid chain: Nonribosomal peptide synthetase 5 (11197 aa).

The tract at residues 19–413 (AQRARKQPDA…DGTLQVVGHK (395 aa)) is adenylation (A) domain 1. The interval 426 to 452 (HASSSASSVGETPGVTGPISTPMGDSV) is disordered. Positions 690 to 897 (KQLRQFCQEQ…LMDESMKQQI (208 aa)) are condensation (C) domain 1. The adenylation (A) domain 2 stretch occupies residues 918-1310 (DAAQDYPDAP…GRHDGQLKVR (393 aa)). A Carrier 1 domain is found at 1446–1522 (ADRSPVHMML…DMANNIAISE (77 aa)). The residue at position 1483 (serine 1483) is an O-(pantetheine 4'-phosphoryl)serine. The condensation (C) domain 2 stretch occupies residues 1952–2380 (VEDVYPCSPV…SDISLMDPLS (429 aa)). Positions 2406–2805 (VARIEPDKMA…QRKDTQIKIR (400 aa)) are adenylation (A) domain 3. Positions 2945–3021 (DSLTSTEVTI…SLAAFVDYDS (77 aa)) constitute a Carrier 2 domain. O-(pantetheine 4'-phosphoryl)serine is present on serine 2982. The interval 3041-3481 (EESFALSPIQ…TSTMKSEFTL (441 aa)) is epimerase (E) domain 1. Positions 3515 to 3957 (EEIFPCSPMQ…VSPETRCELD (443 aa)) are condensation (C) domain 3. The segment at 3976–4371 (FEQQVEKIPD…RRRDNQVKVR (396 aa)) is adenylation (A) domain 4. A Carrier 3 domain is found at 4508 to 4584 (RKLTPMEQQL…ELANHARFKA (77 aa)). Serine 4545 is modified (O-(pantetheine 4'-phosphoryl)serine). The interval 4603–5022 (FPLLPIQRMF…LNEYTAALRS (420 aa)) is epimerase (E) domain 2. The tract at residues 5069 to 5501 (ESIYPCSPLQ…LVGDSERQGL (433 aa)) is condensation (C) domain 4. The segment at 5521 to 5918 (EAQVKAIPDN…RRKDTQVKVR (398 aa)) is adenylation (A) domain 5. In terms of domain architecture, Carrier 4 spans 6068–6141 (SEAEDIIRAV…ALAQFVSQST (74 aa)). Serine 6102 bears the O-(pantetheine 4'-phosphoryl)serine mark. Positions 6162 to 6512 (FSLSPIQQMF…MEILFNYFGQ (351 aa)) are epimerase (E) domain 3. Positions 6636-7076 (EEIFPCSPIQ…LVGAETRREM (441 aa)) are condensation (C) domain 5. Residues 7097–7491 (ERNSQAMPDR…RRRDNQVKVR (395 aa)) form an adenylation (A) domain 6 region. Residues 7636-7712 (KPKTKMEEHF…DLAGRSRFKN (77 aa)) form the Carrier 5 domain. Serine 7673 carries the O-(pantetheine 4'-phosphoryl)serine modification. Positions 7733–8162 (ALLPIQRLFF…KYMLETLASQ (430 aa)) are epimerase (E) domain 4. A condensation (C) domain 6 region spans residues 8205–8638 (EASYPCSPLQ…MLGDSGRKRI (434 aa)). The tract at residues 8660-8832 (EAHVKESPNR…DHRATATEIV (173 aa)) is adenylation (A) domain 7. The region spanning 9173-9248 (SAQTAVVQII…AMAAKAQQIG (76 aa)) is the Carrier 6 domain. Serine 9209 is modified (O-(pantetheine 4'-phosphoryl)serine). The segment at 9565–9683 (RVKDMRRAIP…LHEVVSALQK (119 aa)) is epimerase (E) domain 5. The interval 9721 to 10116 (VEDVYPTSPM…LVPAKHMEQL (396 aa)) is condensation (C) domain 7. An adenylation (A) domain 8 region spans residues 10136 to 10529 (DDMVRSTPTA…VGRKDTQIKI (394 aa)). The 87-residue stretch at 10663 to 10749 (LDSSDYVAMQ…TLAVTIKADM (87 aa)) folds into the Carrier 7 domain. Serine 10708 is modified (O-(pantetheine 4'-phosphoryl)serine). Positions 10806–11104 (NFLVTGSTGF…SLRPMSGPEW (299 aa)) are thioesterase (TE) domain.

Belongs to the NRP synthetase family.

It participates in secondary metabolite biosynthesis. Nonribosomal peptide synthetase; part of the Fg3_54/C64 gene cluster that mediates the biosynthesis of the octapeptide fusaoctaxin A, a virulence factor that is required for cell-to-cell invasiveness of plant host. The 2 nonribosomal peptide synthetases NRPS9 and NRPS5 form an assembly line which likely utilizes GABA as a starter unit (loaded on the unique module M1 of NRPS9) and sequentially incorporates seven extender units composed of the residues L-Ala, L-allo-Ile, L-Ser, L-Val, L-Ser, L-Leu and L-Leu, respectively. During the process, each of the residues that are tethered on modules M3-M7 of NRPS5 containing an E domain can undergo an epimerization reaction to produce a D-configuration before the transpeptidation reaction occurs. The elongation of the peptidyl chain might be terminated by module M8-mediated L-Leu incorporation, followed by R domain-catalyzed 4 electron reduction to release the resulting octapeptide from the assembly line as an alcohol. Fusaoctaxin A is cleaved by the cluster specific ABC transporter FGM5 to the pentapeptide fusapentaxin A and the tripeptide fusatrixin A. The other enzymes from the cluster, FGM1, FGM2, FGM3 and FGM9 seem not to be involved in the biosynthesis of fusaoctaxin A and their functions have still to be determined. This is Nonribosomal peptide synthetase 5 from Gibberella zeae (strain ATCC MYA-4620 / CBS 123657 / FGSC 9075 / NRRL 31084 / PH-1) (Wheat head blight fungus).